We begin with the raw amino-acid sequence, 570 residues long: Cytoplasmic polyadenylation element-binding protein 2 (570 aa).

Positions 434–516 (LVAFIGGVPR…KRVEIKPYFF (83 aa)) constitute an RRM domain.

In terms of tissue distribution, expressed specifically in the spermatogenic germ line.

Cytoplasmic polyadenylation element binding protein that binds to and regulates the translation of specific mRNAs. Not required for oogenesis. In Caenorhabditis elegans, this protein is Cytoplasmic polyadenylation element-binding protein 2 (cpb-2).